We begin with the raw amino-acid sequence, 1007 residues long: Exportin-7 (1007 aa).

The protein belongs to the exportin family.

The protein resides in the nucleus. The protein localises to the cytoplasm. Its subcellular location is the nuclear pore complex. Its function is as follows. Mediates the nuclear export of proteins (cargos) with broad substrate specificity. The protein is Exportin-7 (xpo7) of Dictyostelium discoideum (Social amoeba).